A 93-amino-acid polypeptide reads, in one-letter code: Integration host factor subunit beta (93 aa).

This sequence belongs to the bacterial histone-like protein family. Heterodimer of an alpha and a beta chain.

Functionally, this protein is one of the two subunits of integration host factor, a specific DNA-binding protein that functions in genetic recombination as well as in transcriptional and translational control. The sequence is that of Integration host factor subunit beta from Vibrio parahaemolyticus serotype O3:K6 (strain RIMD 2210633).